A 63-amino-acid polypeptide reads, in one-letter code: UPF0391 membrane protein lpg2415 (63 aa).

The next 2 membrane-spanning stretches (helical) occupy residues 4 to 24 (WALI…RGVA) and 33 to 53 (VLFF…LLGG).

This sequence belongs to the UPF0391 family.

Its subcellular location is the cell membrane. The chain is UPF0391 membrane protein lpg2415 from Legionella pneumophila subsp. pneumophila (strain Philadelphia 1 / ATCC 33152 / DSM 7513).